A 302-amino-acid chain; its full sequence is Syntaxin-17 (302 aa).

N-acetylserine is present on Ser-2. The Cytoplasmic segment spans residues 2–228 (SEDEEKVKLR…KNLGKAAKYK (227 aa)). At Lys-41 the chain carries N6-acetyllysine. The stretch at 53–123 (EEHINAGRTV…EELKKQFNDE (71 aa)) forms a coiled coil. Residue Tyr-157 is modified to Phosphotyrosine; by ABL1. Residues 162-224 (IPRDQNAAES…EEGTKNLGKA (63 aa)) form the t-SNARE coiled-coil homology domain. Residues 229–249 (LAALPVAGALIGGVVGGPIGL) form a helical membrane-spanning segment. The interval 229 to 275 (LAALPVAGALIGGVVGGPIGLLAGFKVAGIAAALGGGVLGFTGGKLI) is necessary and sufficient for localization to autophagosome. Residues 250-254 (LAGFK) are Lumenal-facing. A helical membrane pass occupies residues 255 to 275 (VAGIAAALGGGVLGFTGGKLI). Topologically, residues 276–302 (QRRKQKMMEKLASSCPDLPSQTDKKCS) are cytoplasmic. Ser-289 bears the Phosphoserine mark. Positions 299–302 (KKCS) match the Endoplasmic reticulum retention signal motif.

This sequence belongs to the syntaxin family. Forms a SNARE complex composed of VAMP8, SNAP29 and STX17 involved in fusion of autophagosome with lysosome. May interact with VTI1B. Probably interacts with BET1, SCFD1 and SEC22B. Interacts with PTPN2 and ABL1; involved in STX17 phosphorylation. Interacts with COPB1. Interacts with TMED9 and TMED10; the interaction is direct. Interacts with VAMP7. Interacts with RUBCNL/PACER; promoting targeting of RUBCNL/PACER to autophagosome. Interacts with VAMP8, SNAP29, VPS39 and VPS41; these interactions are increased in the absence of TMEM39A. Interacts with IRGM; promoting STX17 recruitment to autophagosomes. Interacts with ATG8 proteins GABARAP and MAP1LC3B. Interacts with RNF115; this interaction enhances STX17 stability which in turn promotes autophagosome maturation. Interacts with RAB39A (GTP-bound); the interaction promotes autophagosome-lysosome membrane fusion driven by STX17-SNAP29-VAMP8. Interacts with RAB39B; the interaction may promote a different fonction in autophagy as compared with RAB39A. Phosphorylated at Tyr-157 probably by ABL1. Dephosphorylation by PTPN2; regulates exit from the endoplasmic reticulum.

It localises to the endoplasmic reticulum membrane. Its subcellular location is the smooth endoplasmic reticulum membrane. It is found in the endoplasmic reticulum-Golgi intermediate compartment membrane. The protein localises to the cytoplasmic vesicle. The protein resides in the autophagosome membrane. It localises to the COPII-coated vesicle membrane. Its subcellular location is the cytoplasm. It is found in the cytosol. The protein localises to the mitochondrion membrane. The protein resides in the autolysosome membrane. Functionally, SNAREs, soluble N-ethylmaleimide-sensitive factor-attachment protein receptors, are essential proteins for fusion of cellular membranes. SNAREs localized on opposing membranes assemble to form a trans-SNARE complex, an extended, parallel four alpha-helical bundle that drives membrane fusion. STX17 is a SNARE of the autophagosome involved in autophagy through the direct control of autophagosome membrane fusion with the lysosome membrane. May also play a role in the early secretory pathway where it may maintain the architecture of the endoplasmic reticulum-Golgi intermediate compartment/ERGIC and Golgi and/or regulate transport between the endoplasmic reticulum, the ERGIC and the Golgi. This chain is Syntaxin-17, found in Bos taurus (Bovine).